A 756-amino-acid chain; its full sequence is 5-methyltetrahydropteroyltriglutamate--homocysteine methyltransferase (756 aa).

5-methyltetrahydropteroyltri-L-glutamate contacts are provided by residues R16–K19 and K112. Residues I432–S434 and E485 each bind L-homocysteine. Residues I432–S434 and E485 contribute to the L-methionine site. 5-methyltetrahydropteroyltri-L-glutamate contacts are provided by residues R516–C517 and W562. D600 is an L-homocysteine binding site. Residue D600 participates in L-methionine binding. E606 is a binding site for 5-methyltetrahydropteroyltri-L-glutamate. Residues H642, C644, and E666 each contribute to the Zn(2+) site. H695 functions as the Proton donor in the catalytic mechanism. C727 is a binding site for Zn(2+).

It belongs to the vitamin-B12 independent methionine synthase family. Requires Zn(2+) as cofactor.

The enzyme catalyses 5-methyltetrahydropteroyltri-L-glutamate + L-homocysteine = tetrahydropteroyltri-L-glutamate + L-methionine. The protein operates within amino-acid biosynthesis; L-methionine biosynthesis via de novo pathway; L-methionine from L-homocysteine (MetE route): step 1/1. In terms of biological role, catalyzes the transfer of a methyl group from 5-methyltetrahydrofolate to homocysteine resulting in methionine formation. The chain is 5-methyltetrahydropteroyltriglutamate--homocysteine methyltransferase from Haemophilus influenzae (strain PittGG).